The following is an 845-amino-acid chain: Ribonucleoside-diphosphate reductase subunit alpha (845 aa).

Residues 1–98 (MHIIKRNGEP…LYRDDRTKKR (98 aa)) form the ATP-cone domain. Substrate contacts are provided by residues threonine 303, 318–319 (SC), glycine 347, 534–538 (NLCTE), and 725–729 (PTSST). A disulfide bond links cysteine 319 and cysteine 574. Asparagine 534 functions as the Proton acceptor in the catalytic mechanism. Residue cysteine 536 is the Cysteine radical intermediate of the active site. Glutamate 538 serves as the catalytic Proton acceptor.

It belongs to the ribonucleoside diphosphate reductase large chain family. Tetramer of two alpha and two beta subunits.

The enzyme catalyses a 2'-deoxyribonucleoside 5'-diphosphate + [thioredoxin]-disulfide + H2O = a ribonucleoside 5'-diphosphate + [thioredoxin]-dithiol. Under complex allosteric control mediated by deoxynucleoside triphosphates and ATP binding. The type of nucleotide bound at the specificity site determines substrate preference. It seems probable that ATP makes the enzyme reduce CDP and UDP, dGTP favors ADP reduction and dTTP favors GDP reduction. In terms of biological role, provides the precursors necessary for DNA synthesis. Catalyzes the biosynthesis of deoxyribonucleotides from the corresponding ribonucleotides. The polypeptide is Ribonucleoside-diphosphate reductase subunit alpha (nrdA) (Treponema pallidum (strain Nichols)).